The primary structure comprises 310 residues: UDP-N-acetylenolpyruvoylglucosamine reductase (310 aa).

One can recognise an FAD-binding PCMH-type domain in the interval 34–211 (TGGPAQCVYV…REDMGKIAQE (178 aa)). Arg177 is an active-site residue. The Proton donor role is filled by Ser225. Residue Glu295 is part of the active site.

It belongs to the MurB family. It depends on FAD as a cofactor.

The protein resides in the cytoplasm. The enzyme catalyses UDP-N-acetyl-alpha-D-muramate + NADP(+) = UDP-N-acetyl-3-O-(1-carboxyvinyl)-alpha-D-glucosamine + NADPH + H(+). It participates in cell wall biogenesis; peptidoglycan biosynthesis. In terms of biological role, cell wall formation. The chain is UDP-N-acetylenolpyruvoylglucosamine reductase from Beijerinckia indica subsp. indica (strain ATCC 9039 / DSM 1715 / NCIMB 8712).